Here is a 584-residue protein sequence, read N- to C-terminus: DNA ligase (584 aa).

E249 provides a ligand contact to ATP. The N6-AMP-lysine intermediate role is filled by K251. Residues R256, R271, E301, F341, R416, and K422 each coordinate ATP.

Belongs to the ATP-dependent DNA ligase family. Requires Mg(2+) as cofactor.

It catalyses the reaction ATP + (deoxyribonucleotide)n-3'-hydroxyl + 5'-phospho-(deoxyribonucleotide)m = (deoxyribonucleotide)n+m + AMP + diphosphate.. DNA ligase that seals nicks in double-stranded DNA during DNA replication, DNA recombination and DNA repair. This chain is DNA ligase, found in Pyrobaculum islandicum (strain DSM 4184 / JCM 9189 / GEO3).